The primary structure comprises 238 residues: Purine nucleoside phosphorylase DeoD-type (238 aa).

Histidine 5 is an a purine D-ribonucleoside binding site. Phosphate is bound by residues glycine 21, arginine 25, arginine 44, and 88–91 (RVGS). Residues 180–182 (EME) and 204–205 (SD) each bind a purine D-ribonucleoside. Catalysis depends on aspartate 205, which acts as the Proton donor.

The protein belongs to the PNP/UDP phosphorylase family. In terms of assembly, homohexamer; trimer of homodimers.

It catalyses the reaction a purine D-ribonucleoside + phosphate = a purine nucleobase + alpha-D-ribose 1-phosphate. It carries out the reaction a purine 2'-deoxy-D-ribonucleoside + phosphate = a purine nucleobase + 2-deoxy-alpha-D-ribose 1-phosphate. Functionally, catalyzes the reversible phosphorolytic breakdown of the N-glycosidic bond in the beta-(deoxy)ribonucleoside molecules, with the formation of the corresponding free purine bases and pentose-1-phosphate. The sequence is that of Purine nucleoside phosphorylase DeoD-type from Photorhabdus laumondii subsp. laumondii (strain DSM 15139 / CIP 105565 / TT01) (Photorhabdus luminescens subsp. laumondii).